Here is a 172-residue protein sequence, read N- to C-terminus: 3-phenylpropionate/cinnamic acid dioxygenase subunit beta (172 aa).

The protein belongs to the bacterial ring-hydroxylating dioxygenase beta subunit family. This dioxygenase system consists of four proteins: the two subunits of the hydroxylase component (HcaE and HcaF), a ferredoxin (HcaC) and a ferredoxin reductase (HcaD).

The enzyme catalyses 3-phenylpropanoate + NADH + O2 + H(+) = 3-(cis-5,6-dihydroxycyclohexa-1,3-dien-1-yl)propanoate + NAD(+). The catalysed reaction is (E)-cinnamate + NADH + O2 + H(+) = (2E)-3-(cis-5,6-dihydroxycyclohexa-1,3-dien-1-yl)prop-2-enoate + NAD(+). The protein operates within aromatic compound metabolism; 3-phenylpropanoate degradation. Its function is as follows. Part of the multicomponent 3-phenylpropionate dioxygenase. Converts 3-phenylpropionic acid (PP) and cinnamic acid (CI) into 3-phenylpropionate-dihydrodiol (PP-dihydrodiol) and cinnamic acid-dihydrodiol (CI-dihydrodiol), respectively. The polypeptide is 3-phenylpropionate/cinnamic acid dioxygenase subunit beta (Shigella flexneri serotype 5b (strain 8401)).